A 332-amino-acid chain; its full sequence is Glycine betaine-binding periplasmic protein OusX (332 aa).

Residues 1 to 21 form the signal peptide; the sequence is MRNISMATLALTTVLSTGLFA.

As to quaternary structure, the complex is composed of two ATP-binding proteins (OusV), two transmembrane proteins (OusW) and a solute-binding protein (OusX).

Its subcellular location is the periplasm. Functionally, part of the OusB ABC transporter complex involved in glycine betaine and choline uptake. Binds glycine betaine. The sequence is that of Glycine betaine-binding periplasmic protein OusX from Dickeya dadantii (strain 3937) (Erwinia chrysanthemi (strain 3937)).